Reading from the N-terminus, the 518-residue chain is Anthranilate synthase component 1 (518 aa).

L-tryptophan contacts are provided by residues S38 and 283-285 (PYM). 324-325 (GT) serves as a coordination point for chorismate. E357 serves as a coordination point for Mg(2+). Chorismate is bound by residues Y445, R465, 479–481 (GAG), and G481. E494 contacts Mg(2+).

Belongs to the anthranilate synthase component I family. As to quaternary structure, heterotetramer consisting of two non-identical subunits: a beta subunit (TrpG) and a large alpha subunit (TrpE). The cofactor is Mg(2+).

It catalyses the reaction chorismate + L-glutamine = anthranilate + pyruvate + L-glutamate + H(+). Its pathway is amino-acid biosynthesis; L-tryptophan biosynthesis; L-tryptophan from chorismate: step 1/5. With respect to regulation, feedback inhibited by tryptophan. Part of a heterotetrameric complex that catalyzes the two-step biosynthesis of anthranilate, an intermediate in the biosynthesis of L-tryptophan. In the first step, the glutamine-binding beta subunit (TrpG) of anthranilate synthase (AS) provides the glutamine amidotransferase activity which generates ammonia as a substrate that, along with chorismate, is used in the second step, catalyzed by the large alpha subunit of AS (TrpE) to produce anthranilate. In the absence of TrpG, TrpE can synthesize anthranilate directly from chorismate and high concentrations of ammonia. The protein is Anthranilate synthase component 1 (trpE) of Corynebacterium glutamicum (strain ATCC 13032 / DSM 20300 / JCM 1318 / BCRC 11384 / CCUG 27702 / LMG 3730 / NBRC 12168 / NCIMB 10025 / NRRL B-2784 / 534).